The primary structure comprises 498 residues: Putative antiporter subunit mnhD2 (498 aa).

Helical transmembrane passes span 2–22 (LSNLLILPMLLPFLCALILVF), 32–52 (YLYLGTMTITTIISLMLLIYV), 78–98 (LSLIMVTTASFVITLIMAYGF), 108–128 (YHLPSFILFLSVGVIGSFLTS), 130–150 (LFNLYVMFEIMLLASFVLITL), 161–181 (IIYVVLNIIGSWLFLLGIGLL), 209–229 (ISLIFLVAFSAKAALVLFMWL), 240–260 (LAALFAALMTKVGAYALIRFF), 271–291 (IHPLLVTMAAITMVIGAIGVI), 308–328 (IGFIILGLGTNTFAGINGAIF), 330–350 (LVNDIVVKTLLFFIIGSLVYI), 368–388 (FFGVAFIIMIFAIGGVPPFSG), 403–423 (GNYIGLALMIITSLIAMYSLF), and 450–470 (GILSILVVVVIAIGIAAPVLL).

This sequence belongs to the CPA3 antiporters (TC 2.A.63) subunit D family. May form a heterooligomeric complex that consists of seven subunits: mnhA2, mnhB2, mnhC2, mnhD2, mnhE2, mnhF2 and mnhG2.

Its subcellular location is the cell membrane. The chain is Putative antiporter subunit mnhD2 (mnhD2) from Staphylococcus aureus (strain MRSA252).